The following is a 488-amino-acid chain: Probable glycine dehydrogenase (decarboxylating) subunit 2 (488 aa).

The residue at position 274 (Lys274) is an N6-(pyridoxal phosphate)lysine.

Belongs to the GcvP family. C-terminal subunit subfamily. The glycine cleavage system is composed of four proteins: P, T, L and H. In this organism, the P 'protein' is a heterodimer of two subunits. Pyridoxal 5'-phosphate is required as a cofactor.

It carries out the reaction N(6)-[(R)-lipoyl]-L-lysyl-[glycine-cleavage complex H protein] + glycine + H(+) = N(6)-[(R)-S(8)-aminomethyldihydrolipoyl]-L-lysyl-[glycine-cleavage complex H protein] + CO2. In terms of biological role, the glycine cleavage system catalyzes the degradation of glycine. The P protein binds the alpha-amino group of glycine through its pyridoxal phosphate cofactor; CO(2) is released and the remaining methylamine moiety is then transferred to the lipoamide cofactor of the H protein. The protein is Probable glycine dehydrogenase (decarboxylating) subunit 2 of Listeria innocua serovar 6a (strain ATCC BAA-680 / CLIP 11262).